Reading from the N-terminus, the 430-residue chain is Adenylosuccinate synthetase (430 aa).

GTP contacts are provided by residues 12 to 18 (GDEGKGK) and 40 to 42 (GHT). The active-site Proton acceptor is Asp13. Mg(2+) is bound by residues Asp13 and Gly40. IMP contacts are provided by residues 13 to 16 (DEGK), 38 to 41 (NAGH), Thr130, Arg144, Gln225, Thr240, and Arg304. The active-site Proton donor is the His41. 300–306 (ATTGRPR) serves as a coordination point for substrate. Residues Arg306, 332-334 (KLD), and 414-416 (SIG) each bind GTP.

The protein belongs to the adenylosuccinate synthetase family. In terms of assembly, homodimer. It depends on Mg(2+) as a cofactor.

Its subcellular location is the cytoplasm. It catalyses the reaction IMP + L-aspartate + GTP = N(6)-(1,2-dicarboxyethyl)-AMP + GDP + phosphate + 2 H(+). The protein operates within purine metabolism; AMP biosynthesis via de novo pathway; AMP from IMP: step 1/2. In terms of biological role, plays an important role in the de novo pathway of purine nucleotide biosynthesis. Catalyzes the first committed step in the biosynthesis of AMP from IMP. The protein is Adenylosuccinate synthetase of Geobacter metallireducens (strain ATCC 53774 / DSM 7210 / GS-15).